The chain runs to 931 residues: Scaffold attachment factor B1 (931 aa).

A compositionally biased stretch (low complexity) spans 1 to 24; sequence MAETLSGLGDSGAASAAAVSSAAS. A disordered region spans residues 1 to 35; the sequence is MAETLSGLGDSGAASAAAVSSAASETGTRRLSDLR. An N-acetylalanine modification is found at Ala2. Residues Ser24 and Ser55 each carry the phosphoserine modification. The SAP domain maps to 31 to 65; it reads LSDLRVIDLRAELRKRNLTSSGNKSVLMERLKKAI. Residues 64-121 form a disordered region; the sequence is AIEEEGGNPDEIEVISEGNKKMPKRPSKGKKPEDEGVEDNGLEENSGDGQEDVETSLE. Positions 67–77 are enriched in acidic residues; it reads EEGGNPDEIEV. The residue at position 79 (Ser79) is a Phosphoserine. Residues 98–118 show a composition bias toward acidic residues; the sequence is EGVEDNGLEENSGDGQEDVET. Glycyl lysine isopeptide (Lys-Gly) (interchain with G-Cter in SUMO2) cross-links involve residues Lys171 and Lys185. Residues Ser194, Ser196, and Ser208 each carry the phosphoserine modification. Disordered stretches follow at residues 205–304 and 316–430; these read EEAS…TRCQ and KREP…GRNF. A compositionally biased stretch (basic and acidic residues) spans 224–233; sequence CKSEPVKEEG. Lys230 participates in a covalent cross-link: Glycyl lysine isopeptide (Lys-Gly) (interchain with G-Cter in SUMO). Over residues 267-287 the composition is skewed to acidic residues; sequence EEEEEEEEEEEQEEEQEEEGD. A Glycyl lysine isopeptide (Lys-Gly) (interchain with G-Cter in SUMO) cross-link involves residue Lys316. Positions 341 to 356 are enriched in polar residues; sequence EQSSTAAQLPETTSQE. A compositionally biased stretch (basic and acidic residues) spans 368–380; the sequence is EPRDSKDDVKKFA. Lys403 is covalently cross-linked (Glycyl lysine isopeptide (Lys-Gly) (interchain with G-Cter in SUMO2)). A phosphoserine mark is found at Ser405 and Ser406. Residues 412 to 423 show a composition bias toward basic and acidic residues; the sequence is DTKRLSREEKGR. A Glycyl lysine isopeptide (Lys-Gly) (interchain with G-Cter in SUMO2) cross-link involves residue Lys414. Residues 428-506 form the RRM domain; sequence RNFWVSGLSS…KMISVEKAKS (79 aa). Phosphoserine is present on Ser437. 2 stretches are compositionally biased toward basic and acidic residues: residues 500–573 and 581–592; these read SVEK…ERSR and GTERTVVMDKSK. 4 disordered regions span residues 500–663, 691–720, 759–843, and 872–931; these read SVEK…WERE, RLER…LRRQ, RYHS…PRRD, and RWQG…QQTQ. Residues Lys505, Lys536, Lys565, and Lys592 each participate in a glycyl lysine isopeptide (Lys-Gly) (interchain with G-Cter in SUMO2) cross-link. The interval 550–816 is interaction with POLR2A; SFRS1; SFRS9 and SFRS10; that stretch reads TDDGSTEKSK…RHGGPERHGR (267 aa). Lys600 participates in a covalent cross-link: Glycyl lysine isopeptide (Lys-Gly) (interchain with G-Cter in SUMO1); alternate. Lys600 is covalently cross-linked (Glycyl lysine isopeptide (Lys-Gly) (interchain with G-Cter in SUMO2); alternate). A phosphoserine mark is found at Ser602, Ser604, Ser623, and Ser626. The segment covering 603–663 has biased composition (basic and acidic residues); it reads GSKERASKSQ…QRLQAQWERE (61 aa). A Nuclear localization signal motif is present at residues 621-638; it reads KRSVVSFDKVKESRKSRD. Lys629 carries the N6-acetyllysine modification. Residues 759 to 820 are compositionally biased toward basic and acidic residues; it reads RYHSDFSRQD…PERHGRDSRD (62 aa). At Arg834 the chain carries Omega-N-methylarginine. Arg892, Arg898, Arg908, and Arg914 each carry asymmetric dimethylarginine.

Monomer and homodimer. Interacts with KHDRBS3. Interacts with CLK2. Interacts with POLR2A, ASF/SRSF1, SRp30c/SRFS9 and TRA2B/SFRS10. Interacts with SRPK1 and inhibits its activity. Interacts with RBMX. Interacts with FUS. Interacts with ZBED4. In terms of processing, phosphorylated by CDC-like kinase 2 (CLK2). Sumoylated by PIAS1 with SUMO1 and SUMO2/3, desumoylated by SENP1. Sumoylation is required for transcriptional repressor activity.

The protein localises to the nucleus. Its function is as follows. Binds to scaffold/matrix attachment region (S/MAR) DNA and forms a molecular assembly point to allow the formation of a 'transcriptosomal' complex (consisting of SR proteins and RNA polymerase II) coupling transcription and RNA processing. Functions as an estrogen receptor corepressor and can also bind to the HSP27 promoter and decrease its transcription. Thereby acts as a negative regulator of cell proliferation. When associated with RBMX, binds to and stimulates transcription from the SREBF1 promoter. The sequence is that of Scaffold attachment factor B1 (Safb) from Rattus norvegicus (Rat).